A 220-amino-acid polypeptide reads, in one-letter code: 5'(3')-deoxyribonucleotidase, mitochondrial (220 aa).

The N-terminal 23 residues, 1–23, are a transit peptide targeting the mitochondrion; the sequence is MHRLRGCCARPRGAPLRAERSRA. D33 (nucleophile) is an active-site residue. Mg(2+) contacts are provided by D33 and D35. The active-site Proton donor is the D35. Substrate is bound by residues D35, F41, F67, W68, V69, W88, T122, and K157. D168 contacts Mg(2+).

This sequence belongs to the 5'(3')-deoxyribonucleotidase family. Homodimer. The cofactor is Mg(2+).

Its subcellular location is the mitochondrion. Functionally, dephosphorylates specifically the 5' and 2'(3')-phosphates of uracil and thymine deoxyribonucleotides, and so protects mitochondrial DNA replication from excess dTTP. Has only marginal activity towards dIMP and dGMP. The protein is 5'(3')-deoxyribonucleotidase, mitochondrial (Nt5m) of Mus musculus (Mouse).